We begin with the raw amino-acid sequence, 634 residues long: Probable LRR receptor-like serine/threonine-protein kinase At2g23950 (634 aa).

Residues 1–27 (MVVMKLITMKIFSVLLLLCFFVTCSLS) form the signal peptide. Over 28-236 (SEPRNPEVEA…SSGRRTNILA (209 aa)) the chain is Extracellular. Residues asparagine 96 and asparagine 109 are each glycosylated (N-linked (GlcNAc...) asparagine). LRR repeat units follow at residues 99–121 (NLRQVSLQNNNISGKIPPEICSL), 123–145 (KLQTLDLSNNRFSGEIPGSVNQL), 147–167 (NLQYLRLNNNSLSGPFPASLS), and 171–193 (HLSFLDLSYNNLRGPVPKFPART). Residue asparagine 155 is glycosylated (N-linked (GlcNAc...) asparagine). A helical membrane pass occupies residues 237 to 257 (VALGVSLGFAVSVILSLGFIW). Residues 258–634 (YRKKQRRLTM…SFAMELSGPR (377 aa)) lie on the Cytoplasmic side of the membrane. Threonine 296 bears the Phosphothreonine mark. The region spanning 299–554 (FSSKSILGAG…QVALLCTQFL (256 aa)) is the Protein kinase domain. 305–313 (LGAGGFGNV) serves as a coordination point for ATP. At threonine 322 the chain carries Phosphothreonine. Position 327 (lysine 327) interacts with ATP. 2 positions are modified to phosphoserine: serine 380 and serine 383. Position 395 is a phosphothreonine (threonine 395). Aspartate 422 (proton acceptor) is an active-site residue. Phosphothreonine is present on residues threonine 455, threonine 456, and threonine 461. Tyrosine 469 bears the Phosphotyrosine mark. Residue serine 471 is modified to Phosphoserine. At threonine 472 the chain carries Phosphothreonine. Phosphoserine is present on serine 476. The residue at position 551 (threonine 551) is a Phosphothreonine.

Belongs to the protein kinase superfamily. Ser/Thr protein kinase family.

It is found in the membrane. It catalyses the reaction L-seryl-[protein] + ATP = O-phospho-L-seryl-[protein] + ADP + H(+). The enzyme catalyses L-threonyl-[protein] + ATP = O-phospho-L-threonyl-[protein] + ADP + H(+). The chain is Probable LRR receptor-like serine/threonine-protein kinase At2g23950 from Arabidopsis thaliana (Mouse-ear cress).